Reading from the N-terminus, the 459-residue chain is Cysteine--tRNA ligase (459 aa).

Cys29 serves as a coordination point for Zn(2+). The short motif at 31-41 (MTVYDLCHLGH) is the 'HIGH' region element. Residues Cys213, His238, and Glu242 each contribute to the Zn(2+) site. A 'KMSKS' region motif is present at residues 270 to 274 (KMSKS). Lys273 serves as a coordination point for ATP.

Belongs to the class-I aminoacyl-tRNA synthetase family. As to quaternary structure, monomer. It depends on Zn(2+) as a cofactor.

The protein localises to the cytoplasm. The catalysed reaction is tRNA(Cys) + L-cysteine + ATP = L-cysteinyl-tRNA(Cys) + AMP + diphosphate. The protein is Cysteine--tRNA ligase of Variovorax paradoxus (strain S110).